A 429-amino-acid polypeptide reads, in one-letter code: Glucose-1-phosphate adenylyltransferase (429 aa).

Residues Gly-162, 177–178 (EK), and Ser-209 each bind alpha-D-glucose 1-phosphate.

Belongs to the bacterial/plant glucose-1-phosphate adenylyltransferase family. Homotetramer.

The catalysed reaction is alpha-D-glucose 1-phosphate + ATP + H(+) = ADP-alpha-D-glucose + diphosphate. The protein operates within glycan biosynthesis; glycogen biosynthesis. Activated by 3-phosphoglycerate and inhibited by phosphate. Its function is as follows. Involved in the biosynthesis of ADP-glucose, a building block required for the elongation reactions to produce glycogen. Catalyzes the reaction between ATP and alpha-D-glucose 1-phosphate (G1P) to produce pyrophosphate and ADP-Glc. The protein is Glucose-1-phosphate adenylyltransferase of Nostoc sp. (strain PCC 7120 / SAG 25.82 / UTEX 2576).